Reading from the N-terminus, the 336-residue chain is Holliday junction branch migration complex subunit RuvB (336 aa).

Residues 4–184 form a large ATPase domain (RuvB-L) region; sequence ADRLISADAI…FGIVQRLEFY (181 aa). Residues Arg-24, Gly-65, Lys-68, Thr-69, Thr-70, 131–133, Arg-174, Tyr-184, and Arg-221 contribute to the ATP site; that span reads EDY. Thr-69 lines the Mg(2+) pocket. A small ATPAse domain (RuvB-S) region spans residues 185–255; that stretch reads NVADLQYIVG…VATQALDMLA (71 aa). Positions 258-336 are head domain (RuvB-H); that stretch reads TEGFDYMDRK…HFGLTREDLG (79 aa). Positions 294, 313, and 318 each coordinate DNA.

Belongs to the RuvB family. In terms of assembly, homohexamer. Forms an RuvA(8)-RuvB(12)-Holliday junction (HJ) complex. HJ DNA is sandwiched between 2 RuvA tetramers; dsDNA enters through RuvA and exits via RuvB. An RuvB hexamer assembles on each DNA strand where it exits the tetramer. Each RuvB hexamer is contacted by two RuvA subunits (via domain III) on 2 adjacent RuvB subunits; this complex drives branch migration. In the full resolvosome a probable DNA-RuvA(4)-RuvB(12)-RuvC(2) complex forms which resolves the HJ.

The protein localises to the cytoplasm. The enzyme catalyses ATP + H2O = ADP + phosphate + H(+). The RuvA-RuvB-RuvC complex processes Holliday junction (HJ) DNA during genetic recombination and DNA repair, while the RuvA-RuvB complex plays an important role in the rescue of blocked DNA replication forks via replication fork reversal (RFR). RuvA specifically binds to HJ cruciform DNA, conferring on it an open structure. The RuvB hexamer acts as an ATP-dependent pump, pulling dsDNA into and through the RuvAB complex. RuvB forms 2 homohexamers on either side of HJ DNA bound by 1 or 2 RuvA tetramers; 4 subunits per hexamer contact DNA at a time. Coordinated motions by a converter formed by DNA-disengaged RuvB subunits stimulates ATP hydrolysis and nucleotide exchange. Immobilization of the converter enables RuvB to convert the ATP-contained energy into a lever motion, pulling 2 nucleotides of DNA out of the RuvA tetramer per ATP hydrolyzed, thus driving DNA branch migration. The RuvB motors rotate together with the DNA substrate, which together with the progressing nucleotide cycle form the mechanistic basis for DNA recombination by continuous HJ branch migration. Branch migration allows RuvC to scan DNA until it finds its consensus sequence, where it cleaves and resolves cruciform DNA. The protein is Holliday junction branch migration complex subunit RuvB of Pectobacterium carotovorum subsp. carotovorum (strain PC1).